The following is a 315-amino-acid chain: Ribosomal RNA large subunit methyltransferase F (315 aa).

This sequence belongs to the methyltransferase superfamily. METTL16/RlmF family.

The protein resides in the cytoplasm. The enzyme catalyses adenosine(1618) in 23S rRNA + S-adenosyl-L-methionine = N(6)-methyladenosine(1618) in 23S rRNA + S-adenosyl-L-homocysteine + H(+). In terms of biological role, specifically methylates the adenine in position 1618 of 23S rRNA. The chain is Ribosomal RNA large subunit methyltransferase F from Aeromonas salmonicida (strain A449).